Here is an 806-residue protein sequence, read N- to C-terminus: Leucine--tRNA ligase (806 aa).

The short motif at 38–48 (PYPSGEIHMGH) is the 'HIGH' region element. The 'KMSKS' region motif lies at 572 to 576 (KMSKS). K575 is an ATP binding site.

It belongs to the class-I aminoacyl-tRNA synthetase family.

Its subcellular location is the cytoplasm. The enzyme catalyses tRNA(Leu) + L-leucine + ATP = L-leucyl-tRNA(Leu) + AMP + diphosphate. This Helicobacter pylori (strain J99 / ATCC 700824) (Campylobacter pylori J99) protein is Leucine--tRNA ligase.